The primary structure comprises 533 residues: MAFANLRKVLISDSLDPCCRKILQDGGLQVVEKQNLSKEELIAELQDCEGLIVRSATKVTADVINAAEKLQVVGRAGTGVDNVDLEAATRKGILVMNTPNGNSLSAAELTCGMIMCLARQIPQATASMKDGKWERKKFMGTELNGKTLGILGLGRIGREVAIRMQSLGMKTIGYDPIISPEVSASFGVQQLPLEEIWPLCDFITVHTPLLPSTTGLLNDNTFAQCKKGVRVVNCARGGIVDEGALLRALQSGQCAGAALDVFTEEPPRGRALVDHENVISCPHLGASTKEAQSRCGEEIAVQFVDMVKGKSLTGVVNAQALTSAFSPHTKPWIGLAEALGTLMRAWAGSPKGAIQVITQGTSLKNAGNCLSPAVIVGLLKEASKQADVNLVNAKLLVKEAGLNVTTSHSPAAPGEQGFGECLLAVALAGAPYQAVGLVQGTTPVLQGLNGAVFRPEVPLRRDLPLLLFRTQTSDPAMLPTMIGLLAEAGVRLLSYQTSLVSDGETWHVMGISSLLPSLEAWKQHATEAFQFHF.

At Ala-2 the chain carries N-acetylalanine. Ser-14 carries the phosphoserine modification. At Lys-21 the chain carries N6-acetyllysine; alternate. A Glycyl lysine isopeptide (Lys-Gly) (interchain with G-Cter in SUMO1); alternate cross-link involves residue Lys-21. Residue Lys-21 forms a Glycyl lysine isopeptide (Lys-Gly) (interchain with G-Cter in SUMO2); alternate linkage. Position 58 is an N6-acetyllysine (Lys-58). NAD(+) is bound by residues Thr-78, 155–156 (RI), Asp-175, Thr-207, 234–236 (CAR), and Asp-260. A Phosphothreonine modification is found at Thr-78. The active site involves Arg-236. Glu-265 is an active-site residue. Residue His-283 is the Proton donor of the active site. 283 to 286 (HLGA) lines the NAD(+) pocket.

This sequence belongs to the D-isomer specific 2-hydroxyacid dehydrogenase family. In terms of assembly, homotetramer.

The catalysed reaction is (2R)-3-phosphoglycerate + NAD(+) = 3-phosphooxypyruvate + NADH + H(+). It carries out the reaction (R)-2-hydroxyglutarate + NAD(+) = 2-oxoglutarate + NADH + H(+). The enzyme catalyses (S)-malate + NAD(+) = oxaloacetate + NADH + H(+). The protein operates within amino-acid biosynthesis; L-serine biosynthesis; L-serine from 3-phospho-D-glycerate: step 1/3. In terms of biological role, catalyzes the reversible oxidation of 3-phospho-D-glycerate to 3-phosphonooxypyruvate, the first step of the phosphorylated L-serine biosynthesis pathway. Also catalyzes the reversible oxidation of 2-hydroxyglutarate to 2-oxoglutarate and the reversible oxidation of (S)-malate to oxaloacetate. This is D-3-phosphoglycerate dehydrogenase (PHGDH) from Pongo abelii (Sumatran orangutan).